Reading from the N-terminus, the 625-residue chain is uncharacterized protein (625 aa).

The zn(2)-C6 fungal-type DNA-binding region spans 23-51 (CLACRRKKLKCDHGRPCSNCLKRSTIQSC). The span at 93–113 (GTKSQSDYENQQSHNLPSTPS) shows a compositional bias: polar residues. The segment at 93-119 (GTKSQSDYENQQSHNLPSTPSADAETQ) is disordered.

Its subcellular location is the nucleus. The protein localises to the cytoplasm. It is found in the cytoskeleton. The protein resides in the spindle. This is an uncharacterized protein from Schizosaccharomyces pombe (strain 972 / ATCC 24843) (Fission yeast).